The sequence spans 202 residues: uncharacterized protein (202 aa).

This is an uncharacterized protein from Escherichia coli (Bacteriophage T4).